A 314-amino-acid polypeptide reads, in one-letter code: Homoserine O-succinyltransferase (314 aa).

The Acyl-thioester intermediate role is filled by cysteine 142. Substrate is bound by residues lysine 163 and serine 192. The active-site Proton acceptor is the histidine 235. Glutamate 237 is a catalytic residue. Arginine 249 lines the substrate pocket.

The protein belongs to the MetA family.

It localises to the cytoplasm. The catalysed reaction is L-homoserine + succinyl-CoA = O-succinyl-L-homoserine + CoA. It participates in amino-acid biosynthesis; L-methionine biosynthesis via de novo pathway; O-succinyl-L-homoserine from L-homoserine: step 1/1. Transfers a succinyl group from succinyl-CoA to L-homoserine, forming succinyl-L-homoserine. In Shewanella pealeana (strain ATCC 700345 / ANG-SQ1), this protein is Homoserine O-succinyltransferase.